Here is a 162-residue protein sequence, read N- to C-terminus: Protein NrdI (162 aa).

This sequence belongs to the NrdI family.

Functionally, probably involved in ribonucleotide reductase function. This is Protein NrdI from Streptococcus pyogenes serotype M3 (strain ATCC BAA-595 / MGAS315).